The following is a 150-amino-acid chain: PTS system galactitol-specific EIIA component (150 aa).

Residues 1–144 (MTNLFVRSGI…TQLKEYFTKY (144 aa)) form the PTS EIIA type-2 domain. The active-site Tele-phosphohistidine intermediate is His-62. His-62 is modified (phosphohistidine; by HPr).

In terms of assembly, forms a complex with one each of subunit of GatA, GatB and 2 subunits of GatC.

Its subcellular location is the cytoplasm. The phosphoenolpyruvate-dependent sugar phosphotransferase system (sugar PTS), a major carbohydrate active transport system, catalyzes the phosphorylation of incoming sugar substrates concomitantly with their translocation across the cell membrane. The enzyme II complex composed of GatA, GatB and GatC is involved in galactitol transport. This is PTS system galactitol-specific EIIA component (gatA) from Escherichia coli O157:H7.